Consider the following 433-residue polypeptide: Transcription factor TCP18 (433 aa).

Disordered stretches follow at residues 130–163 (QRIS…GTRD) and 247–281 (DDRG…RTPI). In terms of domain architecture, TCP spans 148–206 (RTDRHSKIKTAKGTRDRRMRLSLDVAKELFGLQDMLGFDKASKTVEWLLTQAKPEIIKI). The region spanning 287–304 (KEERAKARERAKGRTMEK) is the R domain.

In terms of tissue distribution, expressed in unelongated axillary buds, and, to a lower extent, in axillary structures such as flowers and siliques.

It localises to the nucleus. Its function is as follows. Transcription factor that prevents axillary bud outgrowth and delays early axillary bud development. Indirectly required for the auxin-induced control of apical dominance. This Arabidopsis thaliana (Mouse-ear cress) protein is Transcription factor TCP18.